A 164-amino-acid chain; its full sequence is Interferon gamma (164 aa).

Residues 1–19 (MTCQTYNLFVLSVIMIYYG) form the signal peptide. N-linked (GlcNAc...) asparagine glycosylation is found at N42 and N61.

The protein belongs to the type II (or gamma) interferon family. In terms of assembly, homodimer.

The protein resides in the secreted. Produced by lymphocytes activated by specific antigens or mitogens. IFN-gamma, in addition to having antiviral activity, has important immunoregulatory functions. It is a potent activator of macrophages, it has antiproliferative effects on transformed cells and it can potentiate the antiviral and antitumor effects of the type I interferons. The sequence is that of Interferon gamma (IFNG) from Meleagris gallopavo (Wild turkey).